Here is a 198-residue protein sequence, read N- to C-terminus: Na(+)-translocating NADH-quinone reductase subunit E (198 aa).

Transmembrane regions (helical) follow at residues 11–31 (SVFIENMALSFFLGMCTFLAV), 35–55 (VSTAFGLGIAVIVVLGIAVPV), 77–97 (FLNFITFIGVIAALVQILEMI), 110–130 (GIFLPLITVNCAIFGGVSFMV), 140–160 (VVYGIGAGTGWMLAIVALAGL), and 176–196 (LGITFITVGLMALGFMSFSGI).

It belongs to the NqrDE/RnfAE family. In terms of assembly, composed of six subunits; NqrA, NqrB, NqrC, NqrD, NqrE and NqrF.

Its subcellular location is the cell inner membrane. It catalyses the reaction a ubiquinone + n Na(+)(in) + NADH + H(+) = a ubiquinol + n Na(+)(out) + NAD(+). NQR complex catalyzes the reduction of ubiquinone-1 to ubiquinol by two successive reactions, coupled with the transport of Na(+) ions from the cytoplasm to the periplasm. NqrA to NqrE are probably involved in the second step, the conversion of ubisemiquinone to ubiquinol. The sequence is that of Na(+)-translocating NADH-quinone reductase subunit E from Haemophilus ducreyi (strain 35000HP / ATCC 700724).